Here is a 176-residue protein sequence, read N- to C-terminus: Probable inosine/xanthosine triphosphatase (176 aa).

D36 is a Mg(2+) binding site.

It belongs to the YjjX NTPase family. As to quaternary structure, homodimer. The cofactor is Mg(2+). Mn(2+) serves as cofactor.

It carries out the reaction XTP + H2O = XDP + phosphate + H(+). The catalysed reaction is ITP + H2O = IDP + phosphate + H(+). In terms of biological role, phosphatase that hydrolyzes non-canonical purine nucleotides such as XTP and ITP to their respective diphosphate derivatives. Probably excludes non-canonical purines from DNA/RNA precursor pool, thus preventing their incorporation into DNA/RNA and avoiding chromosomal lesions. The protein is Probable inosine/xanthosine triphosphatase of Saccharolobus islandicus (strain Y.G.57.14 / Yellowstone #1) (Sulfolobus islandicus).